Consider the following 56-residue polypeptide: MKAIVVLLILALILCLYAMTTVEGACQFWSCNSSCISRGYRQGYCWGIQYKYCQCQ.

The first 24 residues, 1–24 (MKAIVVLLILALILCLYAMTTVEG), serve as a signal peptide directing secretion. 3 disulfide bridges follow: Cys-26–Cys-45, Cys-31–Cys-53, and Cys-35–Cys-55.

Its subcellular location is the secreted. Antibacterial protein involved in the immune response to septic injury. When combined with 14.026 kDa and 14.059 kDa hemolymph antimicrobial peptides, it has a strong cooperative activity against the Gram-positive bacteria B.subtilis and S.aureus, and against the Gram-negative bacteria E.coli DH5-alpha and K.pneumoniae ATCC 138833. Does not show detectable antibacterial activity when present alone. Has no hemolytic activity in human erythrocytes. This is Defensin-1 from Centruroides limpidus (Mexican scorpion).